The chain runs to 226 residues: DELTA-alicitoxin-Pse1b (226 aa).

Residues 1 to 21 (MRHFVVFLYMFLALSIPTAFA) form the signal peptide. Residues 22–45 (KKHIVTKKGNHQDITNDNEGENAE) constitute a propeptide that is removed on maturation. Residues 50–59 (TVAGAVIAGG) are plays an important role in the hemolytic activity. The tract at residues 58–77 (GGELALKILTKILYEIGKID) is N-terminal region. Phosphocholine is bound by residues serine 101, valine 134, serine 152, proline 154, tyrosine 180, and tyrosine 184. The segment at 152–167 (SVPFDYNLYSNWWNVK) is trp-rich region, which is important for the binding to lipid membrane.

The protein belongs to the actinoporin family. Sea anemone subfamily. As to quaternary structure, octamer or nonamer in membranes. Monomer in the soluble state.

Its subcellular location is the secreted. The protein localises to the nematocyst. The protein resides in the target cell membrane. Functionally, pore-forming protein that forms cations-selective hydrophilic pores of around 1 nm and causes cytolysis. Pore formation is a multi-step process that involves specific recognition of membrane sphingomyelin (but neither cholesterol nor phosphatidylcholine) using aromatic rich region and adjacent phosphocholine (POC) binding site, firm binding to the membrane (mainly driven by hydrophobic interactions) accompanied by the transfer of the N-terminal region to the lipid-water interface and finally pore formation after oligomerization of monomers. The chain is DELTA-alicitoxin-Pse1b from Phyllodiscus semoni (Night anemone).